The primary structure comprises 261 residues: V-type proton ATPase subunit D (261 aa).

Ser241 is modified (phosphoserine).

The protein belongs to the V-ATPase D subunit family. As to quaternary structure, V-ATPase is a heteromultimeric enzyme composed of a peripheral catalytic V1 complex (components A to H) attached to an integral membrane V0 proton pore complex (components: a, c, c'', d and e).

The protein resides in the vacuole membrane. Its function is as follows. Subunit of the peripheral V1 complex of vacuolar ATPase. V-ATPase is responsible for acidifying a variety of intracellular compartments in eukaryotic cells, thus providing most of the energy required for transport processes in the vacuolar system. The polypeptide is V-type proton ATPase subunit D (VHA-D) (Arabidopsis thaliana (Mouse-ear cress)).